Here is a 207-residue protein sequence, read N- to C-terminus: Phenazine biosynthesis protein PhzD (207 aa).

Aspartate 38 functions as the Proton donor in the catalytic mechanism. Substrate contacts are provided by residues glutamine 78, arginine 87, lysine 122, and 151 to 155 (YAHVG).

It belongs to the isochorismatase family. In terms of assembly, homodimer.

It catalyses the reaction (2S)-2-amino-4-deoxychorismate + H2O = (5S,6S)-6-amino-5-hydroxycyclohexa-1,3-diene-1-carboxyate + pyruvate. It functions in the pathway antibiotic biosynthesis; phenazine biosynthesis. Its function is as follows. Involved in the biosynthesis of the antibiotic phenazine, a nitrogen-containing heterocyclic molecule having important roles in virulence, competition and biological control. Catalyzes the hydrolysis of the vinyl ether functional group of 2-amino-2-deoxyisochorismate (ADIC), yielding pyruvate and trans-2,3-dihydro-3-hydroxyanthranilic acid (DHHA). The chain is Phenazine biosynthesis protein PhzD from Pseudomonas fluorescens.